Here is a 729-residue protein sequence, read N- to C-terminus: Oligopeptide transporter 4 (729 aa).

Ala2 is modified (N-acetylalanine). Ser8 is modified (phosphoserine). 16 helical membrane-spanning segments follow: residues 37 to 57 (MWFLGLISCSLLSFLNQFFSY), 61 to 81 (PLVITQITVQVATLPIGHFLA), 123 to 143 (AFGSGSAYAVGIITIIKAFYG), 148 to 168 (FIAGWLLIITTQVLGYGWAGL), 177 to 194 (AHMWWPSTLVQVSLFRAL), 207 to 227 (FFVIALVCSFGWYIVPGYLFT), 256 to 276 (GLGAFTLDWTAVASFLFSPLI), 279 to 299 (FFAIANVFIGYVLLIYFVLPL), 352 to 372 (LSMFFALTYGLGFATIASTLT), 410 to 430 (WWFYSMLAATLLISLALCVFL), 438 to 458 (WWGLVFASAMAFVFTLPISII), 522 to 542 (FLVQFIGTILAGTINITVAWW), 592 to 612 (YAAMNWFFLGGALGPVIVWSL), 621 to 637 (WIPLVNLPVLLGATAMM), 640 to 660 (ATAVNYNSWILVGTIFNLFVF), and 673 to 693 (VLSAAMDAGVAFMAVLLYFSV).

This sequence belongs to the oligopeptide OPT transporter (TC 2.A.67.1) family. As to expression, expressed in flowers, leaves, roots, and stems.

The protein resides in the membrane. Its function is as follows. Involved in the translocation of tetra- and pentapeptides across the cellular membrane in an energy-dependent manner. In Arabidopsis thaliana (Mouse-ear cress), this protein is Oligopeptide transporter 4 (OPT4).